A 5142-amino-acid polypeptide reads, in one-letter code: Protein piccolo (5142 aa).

The span at 1–21 (MGNEASLEGEGLPEGLAAAAA) shows a compositional bias: low complexity. Disordered stretches follow at residues 1 to 154 (MGNE…SMMP) and 177 to 583 (DLIS…PSQG). Basic and acidic residues-rich tracts occupy residues 114 to 125 (RTTDTFRSEQKL), 136 to 150 (KESKSRTDLKEEHKS), and 188 to 202 (ETTKKQKVVQKEQGK). Residues 232–244 (QDGTPKSISSQQP) show a composition bias toward polar residues. Composition is skewed to pro residues over residues 298-317 (LPSPSKPPIQQPTPGKPPAQ) and 352-371 (PVQPPGTTKPPAQPLGPAKP). The segment covering 376-385 (TGSEKPSSEQ) has biased composition (polar residues). A 10 X 10 AA tandem approximate repeats of P-A-K-P-Q-P-Q-Q-P-X region spans residues 397-555 (VGKTPAQQPG…PAKPSAQQST (159 aa)). The segment covering 467-493 (TKPPSQLPGPAKPPPQQPGPAKPPPQQ) has biased composition (pro residues). Low complexity predominate over residues 494 to 506 (PGSAKPPSQQPGS). Over residues 507-522 (TKPPPQQPGPAKPSPQ) the composition is skewed to pro residues. The segment covering 523–554 (QPGSTKPPSQQPGSAKPSAQQPSPAKPSAQQS) has biased composition (low complexity). The C4-type zinc finger occupies 589-613 (CPLCNTTELLLHVPEKANFNTCTEC). 2 disordered regions span residues 650-929 (LAPV…TVTG) and 945-1058 (LIST…PEST). Residues 673 to 683 (SKSSPQPQQTS) are compositionally biased toward low complexity. Basic and acidic residues-rich tracts occupy residues 684–702 (PKKDAAPKQDLSKAPEPKK) and 743–755 (EQDKAPVADDKPK). Over residues 765–774 (DLVSSSSATT) the composition is skewed to polar residues. A compositionally biased stretch (basic and acidic residues) spans 841 to 857 (KGQKQVDPVQKKEEPKK). Over residues 873 to 882 (KGSPTPPGPR) the composition is skewed to pro residues. Positions 889–927 (VPTPQQSPKPQEQSRRFSLNLGSITDAPKSQPTTPQETV) are enriched in polar residues. Phosphoserine is present on residues Ser-906 and Ser-918. Phosphothreonine is present on Thr-922. The span at 949-969 (AGQPGPHSQSGPGAPMKQAPA) shows a compositional bias: low complexity. Basic and acidic residues-rich tracts occupy residues 996-1012 (VKKETKAPAAEKLEPKA) and 1019-1034 (KRTETEKKPPPIKDSK). Residues 1059–1082 (CPLCKTELNIGSKDPPNFNTCTEC) form a C4-type zinc finger. Disordered regions lie at residues 1120–1163 (GDIR…QEQE), 1183–1386 (EKIP…TDEK), 1391–1410 (GLKKDSFSQESSPSSPSDLA), and 1423–1868 (QAST…SDPE). Pro residues predominate over residues 1126 to 1139 (PPAPSGPKASPMPV). 3 stretches are compositionally biased toward basic and acidic residues: residues 1193-1265 (QKQE…HDLL), 1307-1318 (PKEDDKTTKTIK), and 1330-1347 (DQVEPGKEKTEKEDDKSD). The span at 1348–1358 (TSSSQQPKSPQ) shows a compositional bias: low complexity. Residues Ser-1356, Ser-1366, Ser-1367, Ser-1396, Ser-1398, Ser-1401, Ser-1402, and Ser-1405 each carry the phosphoserine modification. Positions 1359–1374 (GLSDTGYSSDGISSSL) are enriched in polar residues. Residues 1398–1407 (SQESSPSSPS) are compositionally biased toward low complexity. Basic and acidic residues-rich tracts occupy residues 1428 to 1451 (ADEKSEKKTQPHEVSPEQPKDQEK) and 1469 to 1510 (KESQ…REPY). Phosphoserine is present on residues Ser-1516, Ser-1517, Ser-1519, Ser-1522, Ser-1546, Ser-1549, Ser-1570, and Ser-1572. The segment covering 1564–1576 (SADEDASGSEDDE) has biased composition (acidic residues). Thr-1617 is modified (phosphothreonine). Phosphoserine is present on residues Ser-1618, Ser-1628, and Ser-1640. Acidic residues predominate over residues 1631-1640 (DEDDEAFDES). Residues 1641–1652 (PELKYRETKSQE) show a composition bias toward basic and acidic residues. The segment covering 1671–1689 (ELNSTIADKYSAESSQKKT) has biased composition (polar residues). Positions 1693–1703 (FDEEPELEMES) are enriched in acidic residues. Phosphoserine is present on Ser-1703. Thr-1705 is subject to Phosphothreonine. A phosphoserine mark is found at Ser-1707 and Ser-1712. Residues 1715-1732 (EGSSSLHASSFTPGTSPT) show a composition bias toward polar residues. Acidic residues predominate over residues 1772–1785 (DSSEEEELREEEEL). Residues Ser-1773 and Ser-1774 each carry the phosphoserine modification. Residues 1786–1799 (LKEQEKQREIEQQQ) are compositionally biased toward basic and acidic residues. Thr-1825 bears the Phosphothreonine mark. Residue Ser-1831 is modified to Phosphoserine. The segment covering 1840–1855 (EELRQAAEMEELHRSS) has biased composition (basic and acidic residues). Residues Ser-1860, Ser-1865, Ser-1873, and Ser-1894 each carry the phosphoserine modification. Disordered stretches follow at residues 2169-2192 (PSESATSVPPSDTPSLTSSVSSVC), 2365-2438 (ETFG…PTIL), and 2504-2536 (EPSKPPIAPKPVIPQLPTTTQKPTDIHPKPTGL). Low complexity-rich tracts occupy residues 2174–2192 (TSVPPSDTPSLTSSVSSVC) and 2374–2387 (SQLPSGSPSVSSLP). Composition is skewed to pro residues over residues 2404–2433 (QPPPPPPPPPPPPPPPPPPPPPPLPPPTSP) and 2506–2517 (SKPPIAPKPVIP). Phosphoserine is present on Ser-2562. Thr-3069 bears the Phosphothreonine mark. 2 disordered regions span residues 3407 to 3508 (EKQP…DKTK) and 3558 to 3626 (KTYK…LYSP). The span at 3432-3441 (DDPRSFKKIV) shows a compositional bias: basic and acidic residues. At Ser-3443 the chain carries Phosphoserine. Residues Thr-3447 and Thr-3474 each carry the phosphothreonine modification. Residues 3474-3483 (TDDEDQDEWD) are compositionally biased toward acidic residues. The span at 3574–3585 (DTQSPQYLSATS) shows a compositional bias: polar residues. Phosphoserine is present on residues Ser-3577, Ser-3585, Ser-3615, Ser-3619, Ser-3625, Ser-3628, Ser-3631, Ser-3652, Ser-3678, Ser-3680, and Ser-3686. 2 disordered regions span residues 3652-3746 (SPQK…MGTV) and 3833-3908 (YMSD…QQSH). Composition is skewed to polar residues over residues 3701–3716 (EGYTTKGSQTMTSSGA) and 3733–3745 (STGTQSTFSTMGT). At Ser-3835 the chain carries Phosphoserine. Basic and acidic residues predominate over residues 3845–3857 (TRIESQHGIERPR). Over residues 3859-3908 (APQTEFSQFIPPQTQTESQLVPPTSPYTQYQYSSPALPTQAPTSYTQQSH) the composition is skewed to polar residues. 2 positions are modified to phosphoserine: Ser-4088 and Ser-4204. The interval 4278–4301 (EADKPYSSGSRSRPSSRPSSVYGL) is disordered. Positions 4282 to 4301 (PYSSGSRSRPSSRPSSVYGL) are enriched in low complexity. A phosphoserine mark is found at Ser-4358, Ser-4362, Ser-4365, Ser-4394, and Ser-4430. Positions 4389–4411 (RDQFGSSHSLPEVQQHMREESRT) are disordered. Residues 4496–4590 (RIKITRDSKD…EAEICVRLDL (95 aa)) enclose the PDZ domain. Disordered stretches follow at residues 4597–4618 (ENSQHLELHEPPKAVDKAKSPG) and 4645–4690 (EKGS…TKVV). Positions 4598 to 4615 (NSQHLELHEPPKAVDKAK) are enriched in basic and acidic residues. The span at 4652 to 4673 (SGPTSAGSSSVPSPGQPGSPSV) shows a compositional bias: low complexity. Phosphoserine is present on Ser-4664. The 130-residue stretch at 4694-4823 (ITGEIQLQIN…SHLDNTPRWY (130 aa)) folds into the C2 1 domain. Residues Asp-4723 and Asp-4729 each contribute to the Ca(2+) site. Residue Ser-4778 is modified to Phosphoserine. Ca(2+) contacts are provided by Asp-4793, Asp-4795, Ser-4798, and Asp-4801. 2 disordered regions span residues 4830-4907 (ESID…VTQT) and 4930-4986 (PTKP…QNGQ). 2 stretches are compositionally biased toward low complexity: residues 4838–4853 (HSSQSSQQSPKPSVIK) and 4877–4887 (SSPGSSKSSSE). Over residues 4895 to 4907 (PSRSQSKTSVTQT) the composition is skewed to polar residues. Positions 4941 to 4965 (SSVSTGSSGSSFGSGYSVDSEGSSS) are enriched in low complexity. Residues 5007–5132 (VMGEIKIALK…DLRKRIVNWH (126 aa)) form the C2 2 domain.

Interacts with BSN, ERC2/CAST1, RIMS1 and UNC13A. Interacts (via C-terminus) with TRIO (via N-terminus). Interacts with CTBP1. Interacts with SIAH1; this interaction negatively regulates SIAH1 E3 ligase activity. Directly interacts with GIT1 and GIT2. Ca(2+) is required as a cofactor. In terms of tissue distribution, moderately expressed in the developing cerebral cortex.

It is found in the presynaptic active zone. In terms of biological role, scaffold protein of the presynaptic cytomatrix at the active zone (CAZ) which is the place in the synapse where neurotransmitter is released. After synthesis, participates in the formation of Golgi-derived membranous organelles termed Piccolo-Bassoon transport vesicles (PTVs) that are transported along axons to sites of nascent synaptic contacts. At the presynaptic active zone, regulates the spatial organization of synaptic vesicle cluster, the protein complexes that execute membrane fusion and compensatory endocytosis. Organizes as well the readily releasable pool of synaptic vesicles and safeguards a fraction of them to be not immediately available for action potential-induced release. Also functions in processes other than assembly such as the regulation of specific presynaptic protein ubiquitination by interacting with SIAH1 or the regulation of presynaptic autophagy. Also mediates synapse to nucleus communication leading to reconfiguration of gene expression by associating with the transcriptional corepressor CTBP1 and by subsequently reducing the size of its pool available for nuclear import. The chain is Protein piccolo from Homo sapiens (Human).